The chain runs to 427 residues: Glutamate-1-semialdehyde 2,1-aminomutase (427 aa).

An N6-(pyridoxal phosphate)lysine modification is found at Lys267.

This sequence belongs to the class-III pyridoxal-phosphate-dependent aminotransferase family. HemL subfamily. In terms of assembly, homodimer. Requires pyridoxal 5'-phosphate as cofactor.

Its subcellular location is the cytoplasm. The enzyme catalyses (S)-4-amino-5-oxopentanoate = 5-aminolevulinate. It functions in the pathway porphyrin-containing compound metabolism; protoporphyrin-IX biosynthesis; 5-aminolevulinate from L-glutamyl-tRNA(Glu): step 2/2. This Syntrophotalea carbinolica (strain DSM 2380 / NBRC 103641 / GraBd1) (Pelobacter carbinolicus) protein is Glutamate-1-semialdehyde 2,1-aminomutase.